A 316-amino-acid polypeptide reads, in one-letter code: tRNA dimethylallyltransferase (316 aa).

14-21 contributes to the ATP binding site; it reads GPTAVGKT. Residue 16–21 participates in substrate binding; the sequence is TAVGKT. Positions 39–42 are interaction with substrate tRNA; the sequence is DSMQ.

This sequence belongs to the IPP transferase family. In terms of assembly, monomer. Mg(2+) serves as cofactor.

It carries out the reaction adenosine(37) in tRNA + dimethylallyl diphosphate = N(6)-dimethylallyladenosine(37) in tRNA + diphosphate. Functionally, catalyzes the transfer of a dimethylallyl group onto the adenine at position 37 in tRNAs that read codons beginning with uridine, leading to the formation of N6-(dimethylallyl)adenosine (i(6)A). This chain is tRNA dimethylallyltransferase, found in Bacillus cytotoxicus (strain DSM 22905 / CIP 110041 / 391-98 / NVH 391-98).